A 256-amino-acid polypeptide reads, in one-letter code: 1-(5-phosphoribosyl)-5-[(5-phosphoribosylamino)methylideneamino] imidazole-4-carboxamide isomerase (256 aa).

The active-site Proton acceptor is Asp-9. Asp-130 serves as the catalytic Proton donor.

The protein belongs to the HisA/HisF family.

It localises to the cytoplasm. The enzyme catalyses 1-(5-phospho-beta-D-ribosyl)-5-[(5-phospho-beta-D-ribosylamino)methylideneamino]imidazole-4-carboxamide = 5-[(5-phospho-1-deoxy-D-ribulos-1-ylimino)methylamino]-1-(5-phospho-beta-D-ribosyl)imidazole-4-carboxamide. The protein operates within amino-acid biosynthesis; L-histidine biosynthesis; L-histidine from 5-phospho-alpha-D-ribose 1-diphosphate: step 4/9. The chain is 1-(5-phosphoribosyl)-5-[(5-phosphoribosylamino)methylideneamino] imidazole-4-carboxamide isomerase from Prochlorococcus marinus (strain SARG / CCMP1375 / SS120).